Reading from the N-terminus, the 126-residue chain is Small ribosomal subunit protein uS13 (126 aa).

The tract at residues 92-126 (HRMGLPVRGQRTRTNARTRRGRRQTVAGKKKAPGK) is disordered. Residues 101-126 (QRTRTNARTRRGRRQTVAGKKKAPGK) show a composition bias toward basic residues.

The protein belongs to the universal ribosomal protein uS13 family. In terms of assembly, part of the 30S ribosomal subunit. Forms a loose heterodimer with protein S19. Forms two bridges to the 50S subunit in the 70S ribosome.

Located at the top of the head of the 30S subunit, it contacts several helices of the 16S rRNA. In the 70S ribosome it contacts the 23S rRNA (bridge B1a) and protein L5 of the 50S subunit (bridge B1b), connecting the 2 subunits; these bridges are implicated in subunit movement. Contacts the tRNAs in the A and P-sites. This chain is Small ribosomal subunit protein uS13, found in Nostoc sp. (strain PCC 7120 / SAG 25.82 / UTEX 2576).